The sequence spans 192 residues: GTP-dependent dephospho-CoA kinase (192 aa).

Positions 49, 50, 51, 68, 70, and 127 each coordinate GTP.

The protein belongs to the GTP-dependent DPCK family.

The catalysed reaction is 3'-dephospho-CoA + GTP = GDP + CoA + H(+). The protein operates within cofactor biosynthesis; coenzyme A biosynthesis. Functionally, catalyzes the GTP-dependent phosphorylation of the 3'-hydroxyl group of dephosphocoenzyme A to form coenzyme A (CoA). The polypeptide is GTP-dependent dephospho-CoA kinase (Halorubrum lacusprofundi (strain ATCC 49239 / DSM 5036 / JCM 8891 / ACAM 34)).